The primary structure comprises 1481 residues: MQRSPLEKASVVSKLFFSWTRPILRKGYRQRLELSDIYQIPSADSADNLSEKLEREWDRELASKKNPKLINALRRCFFWRFMFYGILLYLGEVTKAVQPLLLGRIIASYDPDNKEERSIAIYLGIGLCLLFIVRTLLLHPAIFGLHHIGMQMRIAMFSLIYKKTLKLSSRVLDKISIGQLVSLLSNNLNKFDEGLALAHFVWIVPLQVALLMGLIWELLQASAFCGLGFLIVLALFQAGLGRMMMKYRDQRAGKINERLVITSEMIENIQSVKAYCWEEAMEKMIENLRQTELKLTRKAAYVRYFNSSAFFFSGFFVVFLSVLPYALIKGIVLRKIFTTISFCIVLRMAVTRQFPWAVQTWYDSLGAINKIQDFLQKQEYKTLEYNLTTTEVVMENVTAFWEEGFGELFEKAKQNNSNRKTSNDDDSLFFSNFSLLGTPVLKDINFKIERGQLLAVAGSTGAGKTSLLMMIMGELEPSEGKIKHSGRISFCSQFSWIMPGTIKENIIFGVSYDEYRYRSVINACQLEEDISKFAEKDNIVLGEGGITLSGGQRARISLARAVYKDADLYLLDSPFGYLDVLTEKEIFESCVCKLMANKTRILVTSKMEHLKKADKILILHEGSSYFYGTFSELQNLRPDFSSKLMGYDSFDQFSAERRNSILTETLRRFSLEGDAPVSWTETKKQSFKQTGEFGEKRKNSILNPINSIRKFSIVQKTPLQMNGIEEDSDEPLERRLSLVPDSEQGEVILPRISVISTGPTLQARRRQSVLNLMTHSVNQGQSIHRKTAASTRKVSLAPQANLTELDIYSRRLSQETGLEISEEINEEDLKECFFDDMESIPAVTTWNTYLRYITVHKSLIFVLIWCLVIFLAEVAASLVVLWFLGNTPPQDKGNSTYSRNNSYAVIITRTSSYYVFYIYVGVADTLLAMGFFRGLPLVHTLITVSKILHHKMLHSVLQAPMSTLNTLKAGGILNRFSKDIAILDDLLPLTIFDFIQLLLIVIGAIAVVAVLQPYIFVATVPVIVAFIMLRAYFLQTSQQLKQLESEGRSPIFTHLVTSLKGLWTLRAFGRQPYFETLFHKALNLHTANWFLYLSTLRWFQMRIEMIFVIFFIAVTFISILTTGEGEGTVGIILTLAMNIMSTLQWAVNSSIDVDSLMRSVSRVFKFIDMPTEEGKPTRSTKPYKNGQLSKVMVIENSHVKKDDIWPSGGQMTVKDLTAKYTEGGNPILENISFSISPGQRVGLLGRTGSGKSTLLSAFLRLLNTEGEIQIDGVSWDSITLQQWRKAFGVIPQKVFIFSGTFRKNLDPYEQWSDQEIWKVADEVGLRSVIEQFPGKLDFVLVDGGCVLSHGHKQLMCLARSVLSKAKILLLDEPSAHLDPVTYQIIRRTLKQAFADCTVILCEHRIEAMLECQQFLVIEENKVRQYDSIQKLLNERSLFRQAISPSDRVKLFPHRNSSKCKTQPQIAALKEETEEEVQDTRL.

Residues 1 to 77 (MQRSPLEKAS…KLINALRRCF (77 aa)) are Cytoplasmic-facing. The helical transmembrane segment at 78 to 98 (FWRFMFYGILLYLGEVTKAVQ) threads the bilayer. Residues 81–365 (FMFYGILLYL…WAVQTWYDSL (285 aa)) form the ABC transmembrane type-1 1 domain. The Extracellular portion of the chain corresponds to 99-122 (PLLLGRIIASYDPDNKEERSIAIY). A helical membrane pass occupies residues 123–146 (LGIGLCLLFIVRTLLLHPAIFGLH). Residues 147 to 195 (HIGMQMRIAMFSLIYKKTLKLSSRVLDKISIGQLVSLLSNNLNKFDEGL) lie on the Cytoplasmic side of the membrane. A helical transmembrane segment spans residues 196–216 (ALAHFVWIVPLQVALLMGLIW). Residues 217–222 (ELLQAS) lie on the Extracellular side of the membrane. A helical transmembrane segment spans residues 223 to 243 (AFCGLGFLIVLALFQAGLGRM). Residues 244–298 (MMKYRDQRAGKINERLVITSEMIENIQSVKAYCWEEAMEKMIENLRQTELKLTRK) lie on the Cytoplasmic side of the membrane. The helical transmembrane segment at 299–319 (AAYVRYFNSSAFFFSGFFVVF) threads the bilayer. At 320 to 339 (LSVLPYALIKGIVLRKIFTT) the chain is on the extracellular side. The helical transmembrane segment at 340-358 (ISFCIVLRMAVTRQFPWAV) threads the bilayer. Over 359–858 (QTWYDSLGAI…YLRYITVHKS (500 aa)) the chain is Cytoplasmic. Residues Trp401, Ser434, 458–465 (GSTGAGKT), and Gln493 each bind ATP. In terms of domain architecture, ABC transporter 1 spans 423–646 (NDDDSLFFSN…RPDFSSKLMG (224 aa)). Cys524 carries S-palmitoyl cysteine lipidation. Phosphoserine is present on residues Ser549 and Ser660. Positions 654-831 (SAERRNSILT…EEINEEDLKE (178 aa)) are disordered R region. Ser670 bears the Phosphoserine; by PKA mark. A Phosphoserine modification is found at Ser686. Lys688 participates in a covalent cross-link: Glycyl lysine isopeptide (Lys-Gly) (interchain with G-Cter in ubiquitin). 2 positions are modified to phosphoserine: Ser700 and Ser712. Thr717 is modified (phosphothreonine). A phosphoserine mark is found at Ser737, Ser753, Ser768, Ser790, Ser795, and Ser813. A helical transmembrane segment spans residues 859–879 (LIFVLIWCLVIFLAEVAASLV). Positions 859–1155 (LIFVLIWCLV…AVNSSIDVDS (297 aa)) constitute an ABC transmembrane type-1 2 domain. Over 880-918 (VLWFLGNTPPQDKGNSTYSRNNSYAVIITRTSSYYVFYI) the chain is Extracellular. Residues Asn894 and Asn900 are each glycosylated (N-linked (GlcNAc...) asparagine). The chain crosses the membrane as a discontinuously helical span at residues 919–939 (YVGVADTLLAMGFFRGLPLVH). Topologically, residues 940–990 (TLITVSKILHHKMLHSVLQAPMSTLNTLKAGGILNRFSKDIAILDDLLPLT) are cytoplasmic. Residues 991–1011 (IFDFIQLLLIVIGAIAVVAVL) traverse the membrane as a helical segment. At 1012–1013 (QP) the chain is on the extracellular side. The helical transmembrane segment at 1014-1034 (YIFVATVPVIVAFIMLRAYFL) threads the bilayer. Residues 1035-1095 (QTSQQLKQLE…TANWFLYLST (61 aa)) are Cytoplasmic-facing. The helical transmembrane segment at 1096-1116 (LRWFQMRIEMIFVIFFIAVTF) threads the bilayer. The Extracellular portion of the chain corresponds to 1117–1130 (ISILTTGEGEGTVG). The helical transmembrane segment at 1131 to 1151 (IILTLAMNIMSTLQWAVNSSI) threads the bilayer. At 1152–1481 (DVDSLMRSVS…TEEEVQDTRL (330 aa)) the chain is on the cytoplasmic side. The ABC transporter 2 domain maps to 1211-1444 (MTVKDLTAKY…RSLFRQAISP (234 aa)). ATP contacts are provided by residues Tyr1220 and 1245-1252 (GRTGSGKS). Residues 1387 to 1481 (RTLKQAFADC…TEEEVQDTRL (95 aa)) form an interaction with GORASP2 region. Cys1396 is lipidated: S-palmitoyl cysteine. Phosphoserine is present on residues Ser1445 and Ser1457. Residues 1479-1481 (TRL) carry the PDZ-binding motif.

It belongs to the ABC transporter superfamily. ABCC family. CFTR transporter (TC 3.A.1.202) subfamily. Monomer; does not require oligomerization for channel activity. May form oligomers in the membrane. Interacts with SLC26A3, SLC26A6 and NHERF1. Interacts with SHANK2. Interacts with MYO6. Interacts (via C-terminus) with GOPC (via PDZ domain); this promotes CFTR internalization and thereby decreases channel activity. Interacts with SLC4A7 through NHERF1. Found in a complex with MYO5B and RAB11A. Interacts with ANO1. Interacts with SLC26A8. Interacts with AHCYL1; the interaction increases CFTR activity. Interacts with CSE1L. The core-glycosylated form interacts with GORASP2 (via PDZ GRASP-type 1 domain) in respone to ER stress. Interacts with MARCHF2; the interaction leads to CFTR ubiqtuitination and degradation. Interacts with ADGRG2. In terms of processing, N-glycosylated. Post-translationally, phosphorylated; cAMP treatment promotes phosphorylation and activates the channel. Dephosphorylation decreases the ATPase activity (in vitro). Phosphorylation at PKA sites activates the channel. Phosphorylation at PKC sites enhances the response to phosphorylation by PKA. Phosphorylated by AMPK; this inhibits channel activity. Ubiquitinated, leading to its degradation in the lysosome. Deubiquitination by USP10 in early endosomes enhances its endocytic recycling to the cell membrane. Ubiquitinated by RNF185 during ER stress. Ubiquitinated by MARCHF2.

Its subcellular location is the apical cell membrane. It is found in the early endosome membrane. The protein resides in the cell membrane. The protein localises to the recycling endosome membrane. It localises to the endoplasmic reticulum membrane. Its subcellular location is the nucleus. It carries out the reaction ATP + H2O + closed Cl(-) channel = ADP + phosphate + open Cl(-) channel.. The catalysed reaction is chloride(in) = chloride(out). The enzyme catalyses hydrogencarbonate(in) = hydrogencarbonate(out). It catalyses the reaction ATP + H2O = ADP + phosphate + H(+). Epithelial ion channel that plays an important role in the regulation of epithelial ion and water transport and fluid homeostasis. Mediates the transport of chloride ions across the cell membrane. Possesses an intrinsic ATPase activity and utilizes ATP to gate its channel; the passive flow of anions through the channel is gated by cycles of ATP binding and hydrolysis by the ATP-binding domains. The ion channel is also permeable to HCO(3)(-); selectivity depends on the extracellular chloride concentration. Exerts its function also by modulating the activity of other ion channels and transporters. Contributes to the regulation of the pH and the ion content of the epithelial fluid layer. Modulates the activity of the epithelial sodium channel (ENaC) complex, in part by regulating the cell surface expression of the ENaC complex. May regulate bicarbonate secretion and salvage in epithelial cells by regulating the transporter SLC4A7. Can inhibit the chloride channel activity of ANO1. Plays a role in the chloride and bicarbonate homeostasis during sperm epididymal maturation and capacitation. This is Cystic fibrosis transmembrane conductance regulator from Macaca fascicularis (Crab-eating macaque).